The sequence spans 232 residues: Ion-translocating oxidoreductase complex subunit E (232 aa).

6 consecutive transmembrane segments (helical) span residues glycine 18–alanine 38, leucine 39–valine 59, isoleucine 69–alanine 89, glycine 93–glycine 113, alanine 127–alanine 147, and proline 182–leucine 202.

It belongs to the NqrDE/RnfAE family. As to quaternary structure, the complex is composed of six subunits: RnfA, RnfB, RnfC, RnfD, RnfE and RnfG.

Its subcellular location is the cell inner membrane. Functionally, part of a membrane-bound complex that couples electron transfer with translocation of ions across the membrane. The protein is Ion-translocating oxidoreductase complex subunit E of Shewanella baltica (strain OS185).